The chain runs to 481 residues: Protein DETOXIFICATION 12 (481 aa).

12 helical membrane-spanning segments follow: residues 38–58 (LIFF…LQIV), 76–96 (LASS…SCAL), 117–137 (YTAM…WFNM), 154–174 (AGKY…LQPL), 187–207 (LLIT…FLVY), 214–234 (LGGA…LGSF), 267–287 (AAMI…SGLL), 296–316 (VLSV…AIAA), 336–356 (IVVY…SMSL), 380–400 (MAPL…LSGI), 415–435 (LGAF…WIHL), and 438–458 (VGLW…LALV).

Belongs to the multi antimicrobial extrusion (MATE) (TC 2.A.66.1) family.

Its subcellular location is the membrane. The sequence is that of Protein DETOXIFICATION 12 from Arabidopsis thaliana (Mouse-ear cress).